Consider the following 149-residue polypeptide: Deoxyuridine 5'-triphosphate nucleotidohydrolase (149 aa).

Substrate-binding positions include 68-70, Asn-81, 85-87, and Met-95; these read RSG and LID.

The protein belongs to the dUTPase family. It depends on Mg(2+) as a cofactor.

It carries out the reaction dUTP + H2O = dUMP + diphosphate + H(+). Its pathway is pyrimidine metabolism; dUMP biosynthesis; dUMP from dCTP (dUTP route): step 2/2. Its function is as follows. This enzyme is involved in nucleotide metabolism: it produces dUMP, the immediate precursor of thymidine nucleotides and it decreases the intracellular concentration of dUTP so that uracil cannot be incorporated into DNA. This Herminiimonas arsenicoxydans protein is Deoxyuridine 5'-triphosphate nucleotidohydrolase.